Consider the following 181-residue polypeptide: Interleukin-10 (181 aa).

Residues 1 to 19 form the signal peptide; it reads MHGSALLCCCLVLLAGVGA. Cystine bridges form between Cys-31-Cys-129 and Cys-81-Cys-135. Asn-137 is a glycosylation site (N-linked (GlcNAc...) asparagine).

Belongs to the IL-10 family. Homodimer. Interacts with IL10RA and IL10RB.

It localises to the secreted. In terms of biological role, major immune regulatory cytokine that acts on many cells of the immune system where it has profound anti-inflammatory functions, limiting excessive tissue disruption caused by inflammation. Mechanistically, IL10 binds to its heterotetrameric receptor comprising IL10RA and IL10RB leading to JAK1 and STAT2-mediated phosphorylation of STAT3. In turn, STAT3 translocates to the nucleus where it drives expression of anti-inflammatory mediators. Targets antigen-presenting cells (APCs) such as macrophages and monocytes and inhibits their release of pro-inflammatory cytokines including granulocyte-macrophage colony-stimulating factor /GM-CSF, granulocyte colony-stimulating factor/G-CSF, IL-1 alpha, IL-1 beta, IL-6, IL-8 and TNF-alpha. Also interferes with antigen presentation by reducing the expression of MHC-class II and co-stimulatory molecules, thereby inhibiting their ability to induce T cell activation. In addition, controls the inflammatory response of macrophages by reprogramming essential metabolic pathways including mTOR signaling. This Canis lupus familiaris (Dog) protein is Interleukin-10 (IL10).